The primary structure comprises 688 residues: PTS system glucoside-specific EIICBA component (688 aa).

Residues Lys3 to Asp427 enclose the PTS EIIC type-1 domain. The next 10 helical transmembrane spans lie at Ile12–Phe32, Leu81–Met101, Leu137–Leu157, Phe182–Trp202, Leu223–Ile243, Ala284–Ile304, Ile315–Pro335, Phe340–Leu360, Leu364–Gly384, and Leu395–Ile415. A PTS EIIB type-1 domain is found at Ala438–Lys519. Residue Cys460 is the Phosphocysteine intermediate; for EIIB activity of the active site. The PTS EIIA type-1 domain occupies Asp560–Asn664. Residue His612 is the Tele-phosphohistidine intermediate; for EIIA activity of the active site.

It localises to the cell membrane. Its function is as follows. The phosphoenolpyruvate-dependent sugar phosphotransferase system (sugar PTS), a major carbohydrate active -transport system, catalyzes the phosphorylation of incoming sugar substrates concomitantly with their translocation across the cell membrane. This system is involved in alpha- and beta-glucoside transport. This Staphylococcus aureus (strain MRSA252) protein is PTS system glucoside-specific EIICBA component (glcB).